The primary structure comprises 767 residues: Photosystem I P700 chlorophyll a apoprotein A1 (767 aa).

A disordered region spans residues 1–22; sequence MTISPPESGEKNKKVLEDPVKA. The segment covering 8-22 has biased composition (basic and acidic residues); the sequence is SGEKNKKVLEDPVKA. Helical transmembrane passes span 76–99, 162–185, 201–225, 309–327, 368–391, 407–433, 455–477, and 558–576; these read IFSA…FHGA, LMAL…FHYH, LNHH…HIGA, VSHH…GHMY, RHAQ…HHMY, LGLF…IAMV, ALIS…LYIH, and LMIH…LILL. 2 residues coordinate [4Fe-4S] cluster: Cys-600 and Cys-609. Transmembrane regions (helical) follow at residues 616 to 637 and 681 to 703; these read HVFL…HFSW and ISMY…MFLF. Divinylchlorophyll a' is bound at residue His-692. Divinyl chlorophyll a contacts are provided by Met-700 and Tyr-708. Phylloquinone is bound at residue Trp-709. A helical membrane pass occupies residues 741 to 761; it reads AVGVTHFLVGGIATTWAFFHA.

Belongs to the PsaA/PsaB family. As to quaternary structure, the PsaA/B heterodimer binds the P700 divinyl chlorophyll special pair and subsequent electron acceptors. PSI consists of a core antenna complex that captures photons, and an electron transfer chain that converts photonic excitation into a charge separation. The cyanobacterial PSI reaction center is composed of one copy each of PsaA,B,C,D,E,F,I,J,K,L,M and X, and forms trimeric complexes. It depends on PSI electron transfer chain: 5 divinyl chlorophyll a, 1 divinyl chlorophyll a', 2 phylloquinones and 3 4Fe-4S clusters. PSI core antenna: 90 divinyl chlorophyll a, 22 carotenoids, 3 phospholipids and 1 galactolipid. P700 is a divinyl chlorophyll a/divinyl chlorophyll a' dimer, A0 is one or more divinyl chlorophyll a, A1 is one or both phylloquinones and FX is a shared 4Fe-4S iron-sulfur center. as a cofactor.

Its subcellular location is the cellular thylakoid membrane. It carries out the reaction reduced [plastocyanin] + hnu + oxidized [2Fe-2S]-[ferredoxin] = oxidized [plastocyanin] + reduced [2Fe-2S]-[ferredoxin]. PsaA and PsaB bind P700, the primary electron donor of photosystem I (PSI), as well as the electron acceptors A0, A1 and FX. PSI is a plastocyanin/cytochrome c6-ferredoxin oxidoreductase, converting photonic excitation into a charge separation, which transfers an electron from the donor P700 chlorophyll pair to the spectroscopically characterized acceptors A0, A1, FX, FA and FB in turn. Oxidized P700 is reduced on the lumenal side of the thylakoid membrane by plastocyanin or cytochrome c6. This Prochlorococcus marinus (strain MIT 9301) protein is Photosystem I P700 chlorophyll a apoprotein A1.